Here is a 101-residue protein sequence, read N- to C-terminus: DET1- and DDB1-associated protein 1 (101 aa).

Residues 67-101 (NAAKKRDQDQLEIGETSAPPRKIARTDSQEMSEDT) form a disordered region.

It belongs to the DDA1 family. Component of numerous DCX (DDB1-CUL4-X-box) E3 ubiquitin-protein ligase complexes which consist of a core of DDB1, cullin-4 (CUL4A or CUL4B), DDA1 and RBX1.

It participates in protein modification; protein ubiquitination. Functions as a component of numerous distinct DCX (DDB1-CUL4-X-box) E3 ubiquitin-protein ligase complexes which mediate the ubiquitination and subsequent proteasomal degradation of target proteins. In the DCX complexes, acts as a scaffolding subunit required to stabilize the complex. The sequence is that of DET1- and DDB1-associated protein 1 from Xenopus tropicalis (Western clawed frog).